The primary structure comprises 464 residues: Probable 1,4-beta-D-glucan cellobiohydrolase C (464 aa).

An N-terminal signal peptide occupies residues 1–19 (MKNFAPSLALSLLLPTVQA). The CBM1 domain occupies 20–55 (QQTMWGQCGGAGWSGATDCVAGGVCSTQNAYYAQCL). 2 disulfide bridges follow: Cys-27–Cys-44 and Cys-38–Cys-54. The tract at residues 59–102 (TTATTLSTTSKGTTTTTTSSTTSTGGGSSSTTTKTSTSAGPTVT) is thr-rich linker. Residues 65-100 (STTSKGTTTTTTSSTTSTGGGSSSTTTKTSTSAGPT) are compositionally biased toward low complexity. Residues 65–108 (STTSKGTTTTTTSSTTSTGGGSSSTTTKTSTSAGPTVTGSPSGN) are disordered. Positions 103-464 (GSPSGNPFSG…QLLTNANPAF (362 aa)) are catalytic. The active site involves Asp-194. 2 disulfide bridges follow: Cys-195/Cys-254 and Cys-386/Cys-433. Catalysis depends on Asp-240, which acts as the Proton donor. The active-site Nucleophile is the Asp-419.

The protein belongs to the glycosyl hydrolase 6 (cellulase B) family.

Its subcellular location is the secreted. The enzyme catalyses Hydrolysis of (1-&gt;4)-beta-D-glucosidic linkages in cellulose and cellotetraose, releasing cellobiose from the non-reducing ends of the chains.. Its function is as follows. The biological conversion of cellulose to glucose generally requires three types of hydrolytic enzymes: (1) Endoglucanases which cut internal beta-1,4-glucosidic bonds; (2) Exocellobiohydrolases that cut the disaccharide cellobiose from the non-reducing end of the cellulose polymer chain; (3) Beta-1,4-glucosidases which hydrolyze the cellobiose and other short cello-oligosaccharides to glucose. The polypeptide is Probable 1,4-beta-D-glucan cellobiohydrolase C (cbhC) (Aspergillus clavatus (strain ATCC 1007 / CBS 513.65 / DSM 816 / NCTC 3887 / NRRL 1 / QM 1276 / 107)).